We begin with the raw amino-acid sequence, 258 residues long: Ubiquinone/menaquinone biosynthesis C-methyltransferase UbiE (258 aa).

The interval 1–20 (MSESRTSADGGMETSYGFRE) is disordered. Residues Thr-81, Asp-102, and 130 to 131 (NA) contribute to the S-adenosyl-L-methionine site.

This sequence belongs to the class I-like SAM-binding methyltransferase superfamily. MenG/UbiE family.

The enzyme catalyses a 2-demethylmenaquinol + S-adenosyl-L-methionine = a menaquinol + S-adenosyl-L-homocysteine + H(+). It catalyses the reaction a 2-methoxy-6-(all-trans-polyprenyl)benzene-1,4-diol + S-adenosyl-L-methionine = a 5-methoxy-2-methyl-3-(all-trans-polyprenyl)benzene-1,4-diol + S-adenosyl-L-homocysteine + H(+). It functions in the pathway quinol/quinone metabolism; menaquinone biosynthesis; menaquinol from 1,4-dihydroxy-2-naphthoate: step 2/2. Its pathway is cofactor biosynthesis; ubiquinone biosynthesis. In terms of biological role, methyltransferase required for the conversion of demethylmenaquinol (DMKH2) to menaquinol (MKH2) and the conversion of 2-polyprenyl-6-methoxy-1,4-benzoquinol (DDMQH2) to 2-polyprenyl-3-methyl-6-methoxy-1,4-benzoquinol (DMQH2). The protein is Ubiquinone/menaquinone biosynthesis C-methyltransferase UbiE of Rhizobium etli (strain CIAT 652).